Here is a 534-residue protein sequence, read N- to C-terminus: tRNA pseudouridine synthase 1 (534 aa).

The segment at 1–32 is disordered; it reads MGRGGKRTWYNGDRREAKRNRPNSIYNGEGRP. Asp103 (nucleophile) is an active-site residue. 2 disordered regions span residues 246–271 and 507–534; these read LANS…DSDS and QEVS…DLEG. Phosphoserine occurs at positions 518, 519, and 525.

It belongs to the tRNA pseudouridine synthase TruA family. It depends on Zn(2+) as a cofactor.

Its subcellular location is the nucleus. The enzyme catalyses a uridine in tRNA = a pseudouridine in tRNA. It catalyses the reaction uridine in snRNA = pseudouridine in snRNA. The catalysed reaction is a uridine in mRNA = a pseudouridine in mRNA. In terms of biological role, formation of pseudouridine at positions 27 and 28 in the anticodon stem and loop of transfer RNAs; at positions 34 and 36 of intron-containing precursor tRNA(Ile) and at position 35 in the intron-containing tRNA(Tyr). Catalyzes pseudouridylation at position 44 in U2 snRNA. Also catalyzes pseudouridylation of mRNAs. The polypeptide is tRNA pseudouridine synthase 1 (pus1) (Schizosaccharomyces pombe (strain 972 / ATCC 24843) (Fission yeast)).